The chain runs to 118 residues: Myotrophin (118 aa).

ANK repeat units follow at residues 1–30, 34–65, and 67–98; these read MGDK…DVNR, GGRK…NAAD, and HGIT…TVKG.

Belongs to the myotrophin family.

It is found in the cytoplasm. Its subcellular location is the nucleus. It localises to the perinuclear region. Functionally, regulates NF-kappa-B transcription factor activity. Promotes growth of cardiomyocytes, but not cardiomyocyte proliferation. Promotes cardiac muscle hypertrophy. Plays a role in the regulation of the growth of actin filaments. Inhibits the activity of the F-actin-capping protein complex. The sequence is that of Myotrophin (mtpn) from Xenopus tropicalis (Western clawed frog).